A 575-amino-acid polypeptide reads, in one-letter code: Acyloxyacyl hydrolase (575 aa).

The first 23 residues, 1-23 (MQSPWKILTVAPLFLLLSLQSSA), serve as a signal peptide directing secretion. A propeptide spanning residues 24–34 (SPANDDQSRPS) is cleaved from the precursor. The region spanning 37 to 118 (NGHTCVGCVL…HTLEFCKQNT (82 aa)) is the Saposin B-type domain. The important for enzyme activity, localization to cytoplasmic vesicles, and protein stability stretch occupies residues 38–70 (GHTCVGCVLVVSVIEQLAQVHNSTVQASMERLC). Disulfide bonds link Cys41/Cys114, Cys44/Cys108, Cys70/Cys83, Cys123/Cys453, Cys160/Cys169, Cys206/Cys230, Cys249/Cys329, and Cys376/Cys459. A glycan (N-linked (GlcNAc...) asparagine) is linked at Asn59. A lipopolysaccharide binding region spans residues 173-177 (KLAME). Ca(2+)-binding residues include Asp184, Asp186, Asp188, Tyr190, Asp205, Asn207, Asp208, Asp210, Val213, Asp223, Asp227, Asn229, Asn231, Ile233, and Glu245. A glycan (N-linked (GlcNAc...) asparagine) is linked at Asn207. Ser263 is a catalytic residue. N-linked (GlcNAc...) asparagine glycans are attached at residues Asn409 and Asn466.

In terms of assembly, heterodimer of the large and small subunits; disulfide-linked. It depends on Ca(2+) as a cofactor. Cleaved into a large and a small subunit. Post-translationally, the small subunit is N-glycosylated.

It is found in the secreted. It localises to the cytoplasmic vesicle. It carries out the reaction a 3-(acyloxy)acyl derivative of bacterial toxin + H2O = a 3-hydroxyacyl derivative of bacterial toxin + a fatty acid + H(+). Inhibited by EDTA. Its function is as follows. Removes the secondary (acyloxyacyl-linked) fatty acyl chains from the lipid A region of bacterial lipopolysaccharides. By breaking down LPS, terminates the host response to bacterial infection and prevents prolonged and damaging inflammatory responses. In peritoneal macrophages, seems to be important for recovery from a state of immune tolerance following infection by Gram-negative bacteria. This chain is Acyloxyacyl hydrolase, found in Homo sapiens (Human).